We begin with the raw amino-acid sequence, 114 residues long: Large ribosomal subunit protein bL19 (114 aa).

It belongs to the bacterial ribosomal protein bL19 family.

Its function is as follows. This protein is located at the 30S-50S ribosomal subunit interface and may play a role in the structure and function of the aminoacyl-tRNA binding site. The protein is Large ribosomal subunit protein bL19 of Clostridium botulinum (strain ATCC 19397 / Type A).